Here is a 111-residue protein sequence, read N- to C-terminus: Integration host factor subunit alpha (111 aa).

This sequence belongs to the bacterial histone-like protein family. In terms of assembly, heterodimer of an alpha and a beta chain.

Its function is as follows. This protein is one of the two subunits of integration host factor, a specific DNA-binding protein that functions in genetic recombination as well as in transcriptional and translational control. This Chelativorans sp. (strain BNC1) protein is Integration host factor subunit alpha.